Reading from the N-terminus, the 66-residue chain is MRKGIHPEYMECKVTCACGNKFEVRSNKPEMSIDICNECHPFFTGSEKILDAAGRVDKFKKKYNLG.

Zn(2+)-binding residues include cysteine 16, cysteine 18, cysteine 36, and cysteine 39.

It belongs to the bacterial ribosomal protein bL31 family. Type A subfamily. As to quaternary structure, part of the 50S ribosomal subunit. The cofactor is Zn(2+).

Functionally, binds the 23S rRNA. The sequence is that of Large ribosomal subunit protein bL31 from Sulfurovum sp. (strain NBC37-1).